The following is a 151-amino-acid chain: Protein-export protein SecB (151 aa).

This sequence belongs to the SecB family. Homotetramer, a dimer of dimers. One homotetramer interacts with 1 SecA dimer.

The protein localises to the cytoplasm. Functionally, one of the proteins required for the normal export of preproteins out of the cell cytoplasm. It is a molecular chaperone that binds to a subset of precursor proteins, maintaining them in a translocation-competent state. It also specifically binds to its receptor SecA. The protein is Protein-export protein SecB of Azoarcus sp. (strain BH72).